Reading from the N-terminus, the 218-residue chain is Pyridoxine/pyridoxamine 5'-phosphate oxidase (218 aa).

Substrate-binding positions include 14–17 (RREY) and Lys72. FMN contacts are provided by residues 67–72 (RIVLLK), 82–83 (YT), Arg88, Lys89, and Gln111. Residues Tyr129, Arg133, and Ser137 each coordinate substrate. FMN contacts are provided by residues 146–147 (QS) and Trp191. Residue 197-199 (RLH) participates in substrate binding. Arg201 serves as a coordination point for FMN.

The protein belongs to the pyridoxamine 5'-phosphate oxidase family. In terms of assembly, homodimer. Requires FMN as cofactor.

It carries out the reaction pyridoxamine 5'-phosphate + O2 + H2O = pyridoxal 5'-phosphate + H2O2 + NH4(+). It catalyses the reaction pyridoxine 5'-phosphate + O2 = pyridoxal 5'-phosphate + H2O2. The protein operates within cofactor metabolism; pyridoxal 5'-phosphate salvage; pyridoxal 5'-phosphate from pyridoxamine 5'-phosphate: step 1/1. It functions in the pathway cofactor metabolism; pyridoxal 5'-phosphate salvage; pyridoxal 5'-phosphate from pyridoxine 5'-phosphate: step 1/1. Catalyzes the oxidation of either pyridoxine 5'-phosphate (PNP) or pyridoxamine 5'-phosphate (PMP) into pyridoxal 5'-phosphate (PLP). The polypeptide is Pyridoxine/pyridoxamine 5'-phosphate oxidase (Escherichia coli (strain 55989 / EAEC)).